A 496-amino-acid chain; its full sequence is L-carnitine dehydrogenase/betainyl-CoA thioesterase (496 aa).

The L-carnitine dehydrogenase stretch occupies residues 1 to 335 (MTTITKAACI…KRLWEKGGSP (335 aa)). Position 11–16 (11–16 (GGGVIG)) interacts with NAD(+). The betainyl-CoA thioesterase stretch occupies residues 336 to 496 (SKSLDASGPL…GAGRHVGQKR (161 aa)).

The protein in the N-terminal section; belongs to the 3-hydroxyacyl-CoA dehydrogenase family. L-carnitine dehydrogenase subfamily. This sequence in the C-terminal section; belongs to the betainyl-CoA thioesterase family. Homodimer.

Its subcellular location is the cytoplasm. The enzyme catalyses carnitine + NAD(+) = 3-dehydrocarnitine + NADH + H(+). It carries out the reaction N,N,N-trimethylglycyl-CoA + H2O = glycine betaine + CoA + H(+). It functions in the pathway amine and polyamine metabolism; carnitine metabolism. In terms of biological role, multifunctional enzyme that catalyzes the NAD(+)-dependent oxidation of L-carnitine to 3-dehydrocarnitine and the cleavage of betainyl-CoA (N,N,N-trimethylglycyl-CoA) into glycine betaine and coenzyme A. Can also hydrolyze L-carnitinyl-CoA, but with much lower efficiency. Is involved in a L-carnitine degradation pathway that allows R.meliloti to grow on L-carnitine as the sole source of carbon and nitrogen. This is L-carnitine dehydrogenase/betainyl-CoA thioesterase from Rhizobium meliloti (strain 1021) (Ensifer meliloti).